The chain runs to 1052 residues: Membrane-bound transcription factor site-1 protease (1052 aa).

The first 17 residues, 1–17, serve as a signal peptide directing secretion; the sequence is MKLVNIWLLLLVVLLCG. The propeptide occupies 18–186; sequence KKHLGDRLEK…TGRHSSRRLL (169 aa). S168 is subject to Phosphoserine; by FAM20C. The Lumenal segment spans residues 187-998; the sequence is RAIPRQVAQT…IMPGRYNQEV (812 aa). Positions 190–472 constitute a Peptidase S8 domain; that stretch reads PRQVAQTLQA…HGKLDLLRAY (283 aa). D218 (charge relay system) is an active-site residue. N-linked (GlcNAc...) asparagine glycosylation occurs at N236. Residue H249 is the Charge relay system of the active site. N-linked (GlcNAc...) asparagine glycosylation is present at N305. S414 serves as the catalytic Charge relay system. N-linked (GlcNAc...) asparagine glycosylation is found at N515 and N728. Over residues 877 to 887 the composition is skewed to polar residues; that stretch reads PSLSHSGNRQR. Residues 877-899 are disordered; sequence PSLSHSGNRQRPPSGAGSVTPER. N939 carries an N-linked (GlcNAc...) asparagine glycan. A helical transmembrane segment spans residues 999 to 1021; it reads GQTIPVFAFLGAMVVLAFFVVQI. Residues 1022–1052 are Cytoplasmic-facing; it reads NKAKSRPKRRKPRVKRPQLMQQVHPPKTPSV. Residues 1027 to 1037 show a composition bias toward basic residues; sequence RPKRRKPRVKR. The tract at residues 1027-1052 is disordered; the sequence is RPKRRKPRVKRPQLMQQVHPPKTPSV.

It belongs to the peptidase S8 family. Interacts with LYSET; this interaction bridges GNPTAB to MBTPS1. Ca(2+) serves as cofactor. In terms of processing, the 148 kDa zymogen is processed progressively into two membrane-bound 120 and 106 kDa forms in the endoplasmic reticulum, and late into a secreted 98 kDa form. The propeptide is autocatalytically removed through an intramolecular cleavage after Leu-186. Further cleavage generates 14, 10, and 8 kDa intermediates. Widely expressed.

Its subcellular location is the endoplasmic reticulum membrane. The protein localises to the golgi apparatus membrane. It carries out the reaction Processes precursors containing basic and hydrophobic/aliphatic residues at P4 and P2, respectively, with a relatively relaxed acceptance of amino acids at P1 and P3.. Its activity is regulated as follows. Inhibited by divalent copper and zinc ions, but not by nickel or cobalt. Inhibited by its prosegment, but not smaller fragments. Inhibited by 4-(2-aminoethyl)benzenesulfonyl fluoride (AEBSF), a serine protease inhibitor. Serine protease that cleaves after hydrophobic or small residues, provided that Arg or Lys is in position P4: known substrates include SREBF1/SREBP1, SREBF2/SREBP2, BDNF, GNPTAB, ATF6, ATF6B and FAM20C. Cleaves substrates after Arg-Ser-Val-Leu (SREBP2), Arg-His-Leu-Leu (ATF6), Arg-Gly-Leu-Thr (BDNF) and its own propeptide after Arg-Arg-Leu-Leu. Catalyzes the first step in the proteolytic activation of the sterol regulatory element-binding proteins (SREBPs) SREBF1/SREBP1 and SREBF2/SREBP2. Also mediates the first step in the proteolytic activation of the cyclic AMP-dependent transcription factor ATF-6 (ATF6 and ATF6B). Mediates the protein cleavage of GNPTAB into subunit alpha and beta, thereby participating in biogenesis of lysosomes. Cleaves the propeptide from FAM20C which is required for FAM20C secretion from the Golgi apparatus membrane and for enhancement of FAM20C kinase activity, promoting osteoblast differentiation and biomineralization. Involved in the regulation of M6P-dependent Golgi-to-lysosome trafficking of lysosomal enzymes. It is required for the activation of CREB3L2/BBF2H7, a transcriptional activator of MIA3/TANGO and other genes controlling mega vesicle formation. Therefore, it plays a key role in the regulation of mega vesicle-mediated collagen trafficking. In astrocytes and osteoblasts, upon DNA damage and ER stress, mediates the first step of the regulated intramembrane proteolytic activation of the transcription factor CREB3L1, leading to the inhibition of cell-cycle progression. The protein is Membrane-bound transcription factor site-1 protease of Homo sapiens (Human).